We begin with the raw amino-acid sequence, 306 residues long: Cilia- and flagella-associated protein 73 (306 aa).

Coiled-coil stretches lie at residues 49 to 139 (LQAQ…QRLE) and 197 to 231 (QSEK…WESK).

It belongs to the CFAP73 family.

The protein localises to the cytoplasm. The protein resides in the cytoskeleton. It is found in the cilium axoneme. Its function is as follows. May play a role in ciliary/flagellar motility by regulating the assembly and the activity of axonemal inner dynein arm. The sequence is that of Cilia- and flagella-associated protein 73 from Mus musculus (Mouse).